The sequence spans 422 residues: Putative serpin-Z8 (422 aa).

Positions 369–393 (GTVAAAATMTRMLPSGVPPPPVDFV) are RCL.

It belongs to the serpin family.

In terms of biological role, probable serine protease inhibitor. The sequence is that of Putative serpin-Z8 from Oryza sativa subsp. japonica (Rice).